The sequence spans 404 residues: Acetylornithine/succinyldiaminopimelate aminotransferase (404 aa).

Residues 108–109 and phenylalanine 141 contribute to the pyridoxal 5'-phosphate site; that span reads GA. N(2)-acetyl-L-ornithine is bound at residue arginine 144. Residue 226-229 coordinates pyridoxal 5'-phosphate; the sequence is DEIQ. Lysine 255 carries the post-translational modification N6-(pyridoxal phosphate)lysine. Position 283 (threonine 283) interacts with N(2)-acetyl-L-ornithine. Position 284 (threonine 284) interacts with pyridoxal 5'-phosphate.

This sequence belongs to the class-III pyridoxal-phosphate-dependent aminotransferase family. ArgD subfamily. Homodimer. The cofactor is pyridoxal 5'-phosphate.

The protein localises to the cytoplasm. It carries out the reaction N(2)-acetyl-L-ornithine + 2-oxoglutarate = N-acetyl-L-glutamate 5-semialdehyde + L-glutamate. The catalysed reaction is N-succinyl-(2S,6S)-2,6-diaminopimelate + 2-oxoglutarate = (S)-2-succinylamino-6-oxoheptanedioate + L-glutamate. Its pathway is amino-acid biosynthesis; L-arginine biosynthesis; N(2)-acetyl-L-ornithine from L-glutamate: step 4/4. It functions in the pathway amino-acid biosynthesis; L-lysine biosynthesis via DAP pathway; LL-2,6-diaminopimelate from (S)-tetrahydrodipicolinate (succinylase route): step 2/3. In terms of biological role, involved in both the arginine and lysine biosynthetic pathways. This Buchnera aphidicola subsp. Schizaphis graminum (strain Sg) protein is Acetylornithine/succinyldiaminopimelate aminotransferase.